The following is a 298-amino-acid chain: Aspartate carbamoyltransferase catalytic subunit (298 aa).

Positions 50 and 51 each coordinate carbamoyl phosphate. Position 79 (Lys79) interacts with L-aspartate. 3 residues coordinate carbamoyl phosphate: Arg100, His128, and Gln131. Residues Arg160 and Arg221 each contribute to the L-aspartate site. Leu260 and Pro261 together coordinate carbamoyl phosphate.

This sequence belongs to the aspartate/ornithine carbamoyltransferase superfamily. ATCase family. In terms of assembly, heterooligomer of catalytic and regulatory chains.

It catalyses the reaction carbamoyl phosphate + L-aspartate = N-carbamoyl-L-aspartate + phosphate + H(+). It participates in pyrimidine metabolism; UMP biosynthesis via de novo pathway; (S)-dihydroorotate from bicarbonate: step 2/3. In terms of biological role, catalyzes the condensation of carbamoyl phosphate and aspartate to form carbamoyl aspartate and inorganic phosphate, the committed step in the de novo pyrimidine nucleotide biosynthesis pathway. The sequence is that of Aspartate carbamoyltransferase catalytic subunit from Methanosphaerula palustris (strain ATCC BAA-1556 / DSM 19958 / E1-9c).